We begin with the raw amino-acid sequence, 372 residues long: uncharacterized protein (372 aa).

Residues D202 and 227–229 contribute to the S-adenosyl-L-methionine site; that span reads GDF.

Belongs to the class I-like SAM-binding methyltransferase superfamily. Cation-independent O-methyltransferase family.

This is an uncharacterized protein from Methanocaldococcus jannaschii (strain ATCC 43067 / DSM 2661 / JAL-1 / JCM 10045 / NBRC 100440) (Methanococcus jannaschii).